A 156-amino-acid polypeptide reads, in one-letter code: Small ribosomal subunit protein uS7 (156 aa).

Belongs to the universal ribosomal protein uS7 family. In terms of assembly, part of the 30S ribosomal subunit. Contacts proteins S9 and S11.

Functionally, one of the primary rRNA binding proteins, it binds directly to 16S rRNA where it nucleates assembly of the head domain of the 30S subunit. Is located at the subunit interface close to the decoding center, probably blocks exit of the E-site tRNA. In Aliivibrio salmonicida (strain LFI1238) (Vibrio salmonicida (strain LFI1238)), this protein is Small ribosomal subunit protein uS7.